Reading from the N-terminus, the 153-residue chain is MKERDAAPAERGKPATYTGDKKAKMAAKTNKKWVRLATVFAYVLSVSLAAIVLAVYYSLIWQPVGAGTSGGAAGPPPGGSNATGPSGTSGAAAAGPNTTGSSRREAPRDVPPLQAARPAPPEPPADSPPAGPLERPRGPDEDEEETAAAPGSR.

A compositionally biased stretch (basic and acidic residues) spans 1–23 (MKERDAAPAERGKPATYTGDKKA). A disordered region spans residues 1–24 (MKERDAAPAERGKPATYTGDKKAK). Residues 36–56 (LATVFAYVLSVSLAAIVLAVY) traverse the membrane as a helical segment. Residues 66-153 (AGTSGGAAGP…EETAAAPGSR (88 aa)) are disordered. A compositionally biased stretch (low complexity) spans 79 to 101 (GSNATGPSGTSGAAAAGPNTTGS). Residues 118–131 (PAPPEPPADSPPAG) show a composition bias toward pro residues.

The protein resides in the membrane. The chain is Putative transmembrane protein INAFM2 from Homo sapiens (Human).